A 336-amino-acid polypeptide reads, in one-letter code: Dihydroorotate dehydrogenase (quinone) (336 aa).

FMN-binding positions include 62-66 (AGLDK) and Thr86. Substrate is bound at residue Lys66. 111 to 115 (NRMGF) is a substrate binding site. Asn139 and Asn172 together coordinate FMN. Residue Asn172 participates in substrate binding. Catalysis depends on Ser175, which acts as the Nucleophile. Residue Asn177 participates in substrate binding. FMN-binding residues include Lys217 and Thr245. 246 to 247 (NT) contributes to the substrate binding site. Residues Gly268, Gly297, and 318 to 319 (YS) contribute to the FMN site.

This sequence belongs to the dihydroorotate dehydrogenase family. Type 2 subfamily. In terms of assembly, monomer. The cofactor is FMN.

The protein resides in the cell membrane. It carries out the reaction (S)-dihydroorotate + a quinone = orotate + a quinol. It participates in pyrimidine metabolism; UMP biosynthesis via de novo pathway; orotate from (S)-dihydroorotate (quinone route): step 1/1. In terms of biological role, catalyzes the conversion of dihydroorotate to orotate with quinone as electron acceptor. The polypeptide is Dihydroorotate dehydrogenase (quinone) (Escherichia fergusonii (strain ATCC 35469 / DSM 13698 / CCUG 18766 / IAM 14443 / JCM 21226 / LMG 7866 / NBRC 102419 / NCTC 12128 / CDC 0568-73)).